The following is a 402-amino-acid chain: Protein prenyltransferase alpha subunit repeat-containing protein 1 (402 aa).

An N-acetylalanine modification is found at Ala-2. 4 PFTA repeats span residues 87–120 (LIDVTCTLLLLNPDFTTAWNVRKELILSGTLNPI), 122–155 (DLHLGKLALTKFPKSPETWIHRRWVLQQLIQETS), 180–213 (EMEVCGEAAGRYPSNYNAWSHRIWVLQHLAKLDV), and 219–252 (ELSSTKHWASMHVSDHSGFHYRQFLLKSLISQTV). The disordered stretch occupies residues 263-282 (LRSEPALVPPKDEEAAVSTE). One copy of the PFTA 5 repeat lies at 295–328 (EVEFSTDLIDSYPGHETLWCHRRHIFYLQHHLNA).

The protein belongs to the protein prenyltransferase subunit alpha family.

In Homo sapiens (Human), this protein is Protein prenyltransferase alpha subunit repeat-containing protein 1 (PTAR1).